We begin with the raw amino-acid sequence, 120 residues long: Reprimo-like protein (120 aa).

A helical transmembrane segment spans residues 67–87 (VAQIAVLCVLSLTVVFGVFFL). Phosphoserine is present on Ser109.

The protein belongs to the reprimo family.

The protein localises to the membrane. The chain is Reprimo-like protein (RPRML) from Homo sapiens (Human).